A 318-amino-acid polypeptide reads, in one-letter code: Protein W (318 aa).

2 disordered regions span residues methionine 1 to glutamate 23 and serine 38 to alanine 318. The segment covering isoleucine 7–glycine 20 has biased composition (basic and acidic residues). The span at leucine 50 to glycine 59 shows a compositional bias: polar residues. Serine 68 is modified (phosphoserine; by host). Over residues arginine 83–alanine 101 the composition is skewed to basic and acidic residues. Serine 125 carries the post-translational modification Phosphoserine; by host. Over residues glycine 150–aspartate 168 the composition is skewed to basic and acidic residues. Residues alanine 191–alanine 206 show a composition bias toward polar residues. Serine 192, serine 249, serine 257, and serine 260 each carry phosphoserine; by host.

This Sendai virus (strain Fushimi) (SeV) protein is Protein W (P/V/C).